A 132-amino-acid polypeptide reads, in one-letter code: Large ribosomal subunit protein bL17 (132 aa).

The protein belongs to the bacterial ribosomal protein bL17 family. As to quaternary structure, part of the 50S ribosomal subunit. Contacts protein L32.

In Ralstonia pickettii (strain 12J), this protein is Large ribosomal subunit protein bL17.